Consider the following 513-residue polypeptide: MSPVDAARPQLKIRQIHLDTGRENVAVISRHSKALRPEVFSGFSRVEIRRGNQSMLATLLITDDNAMVGPDDLGLAEPAFRRFGEAAGSLVSVTPASPPASLDAVRGKIQGRTLTAPEIEAIVNDLARYRYSDMEIAAFLIGAARFMTSDELLALVSAMASVGTQLRWDRPVVVDKHCIGGIPGNRTSMVLVPIVAAHGLTIPKTSSRAITSPAGTADTMEVLARVDVGVPEMKEIVAACNGCLIWGGHVNLSPADDILISVERPLCLDTREQMVASIMSKKLAAGSTHLLVDLPLGPSAKVISPIDAMRLRKLFEFVGDHFGIAVETITTDGRQPIGNGIGPVLEAQDVMAVLGNDPKAPADLREKSLRLAGHLLEYDPNLRGGSGYARARELLESGAALKQMQKIIDNQGPTNCRKDLGTLTTDIVAPRDGVVTGIDNLQLNRLARTAGAPIDKGAGIKLFKKVGDRVEQGEPLYRIYAFDPSEQELAVSAAEESSGYTVDGVHAFREQVL.

This sequence belongs to the thymidine/pyrimidine-nucleoside phosphorylase family. Type 2 subfamily.

The catalysed reaction is thymidine + phosphate = 2-deoxy-alpha-D-ribose 1-phosphate + thymine. In Rhodopseudomonas palustris (strain BisA53), this protein is Putative thymidine phosphorylase.